The primary structure comprises 1098 residues: MAPNYFQKPEAALKRAEELIQVGKESDALDTLHDTIKARRHKQWTTVHEQIMIKHMELCVDLKKQHLAKDALFQYKALTQQINVKSLETVVEHFLKLAEQRTEDAQKQSIEKVEEIGDLDQGDVPERLLLAVVSGAAAQDRMDRTVLAPWLRFLWDSYRNCLELLRNNAQVEQLYHTISRHSFSFCLRYQRRTEFRKLCDLLRMHLNQIQKHQYAPNVNSFRVKLTSPESLTLMQDTRLVQLDTAIQMELWQEAYKSAEDVHGMMQLSKDKDKRTVKPSSYVNYYDKLALVFWKAGNRLFHAAALLQKFIIYKDMKKSFTQEEAQEQATRVLLATLSIPEGSDLPSDLSRNLDIEEQHVANMRLLSNLLRLPIAPTKVGILKEAARIGVPEAAGQVAKDLFKLLESNFSPLRVAKDVQSVLDTITRPDHLQYVESLQAVAAVKALKQVSVIYEAISWERIRKIIPFYHDLALERLVVEASKHRIVKAQLDHRADCVRFGSSDATLAGGVDEYDNNEGFTGDDTQLGVEGVRNHLEAMYTRLRVLVEGLDSEKRRKEIVKKIENHVTSYEKNRVTEIERIHRRKKMLENYKENWERVKAEKAATAATEQAKREEAARAEEMKRLDEQNKESERKRKQAEQEEIQKKIKRDQLHKMQQNVIYQAIIKEKGLEQFRDMDPEQVLREQRERLDKERAETQRRLQQQEKKFDHHIRALHLEEMNERRAVMHMRLNEAPRLHEEYENKRIEKEIAAHENHVKLWSMWDQVREATLDWVETVKVENQENLEKKISDWEVKLEAVRNSRLAERAEKRKKERKEAAMQAKIAEERKRREEEERARQAVIDSQRRPHGERGQRREMENSAAMQDSDWRRNAPPRDSMPQREPRPMRDGPPREPFREMPSSKADTDSSWRSSAQPTRKPDDRRSDDFRRDDGPRRSDDHRRNDEFRRSDDFRRNDDFRRDGPPRPMSKADTDQKWERGAVTKTVVSPPKTENQPAPAAEAPKADGPRRFIPPALRNKPAGGGDEQPAPQRGANVTSPPDRAPGLRGPPGPGGRDLPPRDLPPRDGPRDIPRRDGPRRDGPNRNSGANNAGNADSANWRR.

Positions 324-503 (AQEQATRVLL…DCVRFGSSDA (180 aa)) constitute a PCI domain. Residues 574-844 (TEIERIHRRK…ARQAVIDSQR (271 aa)) adopt a coiled-coil conformation. Disordered regions lie at residues 599–648 (EKAA…KIKR) and 805–1098 (RAEK…NWRR). Basic and acidic residues-rich tracts occupy residues 608-648 (QAKR…KIKR), 805-857 (RAEK…REME), and 877-895 (MPQR…EPFR). Positions 905–914 (DSSWRSSAQP) are enriched in polar residues. Basic and acidic residues-rich tracts occupy residues 916-978 (RKPD…ERGA) and 1054-1079 (LPPR…RDGP). Over residues 1080–1098 (NRNSGANNAGNADSANWRR) the composition is skewed to low complexity.

Belongs to the eIF-3 subunit A family. In terms of assembly, component of the eukaryotic translation initiation factor 3 (eIF-3) complex.

Its subcellular location is the cytoplasm. RNA-binding component of the eukaryotic translation initiation factor 3 (eIF-3) complex, which is involved in protein synthesis of a specialized repertoire of mRNAs and, together with other initiation factors, stimulates binding of mRNA and methionyl-tRNAi to the 40S ribosome. The eIF-3 complex specifically targets and initiates translation of a subset of mRNAs involved in cell proliferation. This is Eukaryotic translation initiation factor 3 subunit A from Caenorhabditis briggsae.